Here is a 148-residue protein sequence, read N- to C-terminus: MKALQASTSYSFFSKSSSATLQRRTHRPQCVILSKVEPSDKSVEIMRKFSEQYARKSGTYFCVDKGVTSVVIKGLAEHKDSLGAPLCPCRYYDDKAAEATQGFWNCPCVPMRERKECHCMLFLTPENDFAGKDQTIGLDEIREVTANM.

Residues 1 to 35 (MKALQASTSYSFFSKSSSATLQRRTHRPQCVILSK) constitute a chloroplast transit peptide. Residue C87 coordinates [4Fe-4S] cluster. C89 serves as the catalytic Nucleophile. Cysteines 89 and 119 form a disulfide. 3 residues coordinate [4Fe-4S] cluster: C106, C108, and C117.

Belongs to the ferredoxin thioredoxin reductase beta subunit family. As to quaternary structure, heterodimer of subunit A (variable subunit) and subunit B (catalytic subunit). Heterodimeric FTR forms a complex with ferredoxin and thioredoxin. [4Fe-4S] cluster is required as a cofactor.

Its subcellular location is the plastid. The protein resides in the chloroplast. The catalysed reaction is [thioredoxin]-disulfide + 2 reduced [2Fe-2S]-[ferredoxin] + 2 H(+) = [thioredoxin]-dithiol + 2 oxidized [2Fe-2S]-[ferredoxin]. Catalytic subunit of the ferredoxin-thioredoxin reductase (FTR), which catalyzes the two-electron reduction of thioredoxins by the electrons provided by reduced ferredoxin. The sequence is that of Ferredoxin-thioredoxin reductase catalytic chain, chloroplastic from Spinacia oleracea (Spinach).